A 150-amino-acid polypeptide reads, in one-letter code: Ribonuclease K6 (150 aa).

The signal sequence occupies residues 1–23 (MVLCFPLLLLLLVLWGPVCPLHA). Catalysis depends on His-38, which acts as the Proton acceptor. Intrachain disulfides connect Cys-46–Cys-104, Cys-60–Cys-114, Cys-78–Cys-129, and Cys-85–Cys-92. A glycan (N-linked (GlcNAc...) asparagine) is linked at Asn-55. Residues 61-65 (KHQNT) and Lys-86 contribute to the substrate site. Asn-100 carries N-linked (GlcNAc...) asparagine glycosylation. Arg-105 contributes to the substrate binding site. His-145 serves as the catalytic Proton donor.

The protein belongs to the pancreatic ribonuclease family. Interacts (via N-terminus) with bacterial lipopolysaccharide (LPS).

The protein resides in the secreted. Its subcellular location is the lysosome. The protein localises to the cytoplasmic granule. Ribonuclease which shows a preference for the pyrimidines uridine and cytosine. Has potent antibacterial activity against a range of Gram-positive and Gram-negative bacteria, including P.aeruginosa, A.baumanii, M.luteus, S.aureus, E.faecalis, E.faecium, S.saprophyticus and E.coli. Causes loss of bacterial membrane integrity, and also promotes agglutination of Gram-negative bacteria. Probably contributes to urinary tract sterility. Bactericidal activity is independent of RNase activity. The chain is Ribonuclease K6 (RNASE6) from Gorilla gorilla gorilla (Western lowland gorilla).